We begin with the raw amino-acid sequence, 429 residues long: C4-dicarboxylate transport protein (429 aa).

8 helical membrane passes run 3-23 (LTIF…GVLL), 44-64 (LIKM…IAGM), 76-96 (IALL…LLIV), 142-162 (IGAF…LFGF), 184-204 (VIFG…FGAM), 222-242 (LIAC…GSIA), 326-346 (VIHQ…AAGV), and 352-372 (IVLA…LALI).

The protein belongs to the dicarboxylate/amino acid:cation symporter (DAACS) (TC 2.A.23) family.

The protein localises to the cell inner membrane. Functionally, responsible for the transport of dicarboxylates such as succinate, fumarate, and malate from the periplasm across the membrane. This chain is C4-dicarboxylate transport protein, found in Serratia proteamaculans (strain 568).